The primary structure comprises 329 residues: Beta-ketoacyl-[acyl-carrier-protein] synthase III (329 aa).

Residues C112 and H253 contribute to the active site. The segment at 254–258 (QANQR) is ACP-binding. N283 is a catalytic residue.

It belongs to the thiolase-like superfamily. FabH family. Homodimer.

The protein resides in the cytoplasm. It carries out the reaction malonyl-[ACP] + acetyl-CoA + H(+) = 3-oxobutanoyl-[ACP] + CO2 + CoA. Its pathway is lipid metabolism; fatty acid biosynthesis. In terms of biological role, catalyzes the condensation reaction of fatty acid synthesis by the addition to an acyl acceptor of two carbons from malonyl-ACP. Catalyzes the first condensation reaction which initiates fatty acid synthesis and may therefore play a role in governing the total rate of fatty acid production. Possesses both acetoacetyl-ACP synthase and acetyl transacylase activities. Its substrate specificity determines the biosynthesis of branched-chain and/or straight-chain of fatty acids. This is Beta-ketoacyl-[acyl-carrier-protein] synthase III from Gloeobacter violaceus (strain ATCC 29082 / PCC 7421).